The primary structure comprises 88 residues: Cell division topological specificity factor (88 aa).

It belongs to the MinE family.

Prevents the cell division inhibition by proteins MinC and MinD at internal division sites while permitting inhibition at polar sites. This ensures cell division at the proper site by restricting the formation of a division septum at the midpoint of the long axis of the cell. This Clostridium novyi (strain NT) protein is Cell division topological specificity factor.